Here is a 194-residue protein sequence, read N- to C-terminus: High mobility group protein B4 (194 aa).

2 DNA-binding regions (HMG box) span residues 9 to 79 and 93 to 161; these read PKAN…MNYF and PRRP…SVYR.

Belongs to the HMGB family.

It is found in the nucleus. The protein localises to the chromosome. This Bos taurus (Bovine) protein is High mobility group protein B4 (HMGB4).